We begin with the raw amino-acid sequence, 336 residues long: Neuropeptides B/W receptor type 2 (336 aa).

The segment at 1 to 25 (MMEATGLEGLESTSSPCPGSTGTGL) is disordered. The Extracellular segment spans residues 1-45 (MMEATGLEGLESTSSPCPGSTGTGLSWDNGTRHNATFPEPLPALY). A compositionally biased stretch (low complexity) spans 12-25 (STSSPCPGSTGTGL). 2 N-linked (GlcNAc...) asparagine glycosylation sites follow: asparagine 29 and asparagine 34. A helical transmembrane segment spans residues 46–68 (VLLPVVYSVICAVGLVGNAAVIC). At 69 to 80 (VILRAPKMKTVT) the chain is on the cytoplasmic side. Residues 81 to 103 (HVFILNLAIADGLFTLVLPTNIA) traverse the membrane as a helical segment. Over 104-127 (EHLLQRWPFGEVLCKLVLAIDHCN) the chain is Extracellular. A disulfide bridge connects residues cysteine 117 and cysteine 197. The chain crosses the membrane as a helical span at residues 128-146 (IFSSVYFLAAMSIDRYLVV). The Cytoplasmic segment spans residues 147–165 (LATARSRRMPRRTVHRAKV). Residues 166–188 (ASLCVWLGVTVAVLPFLTFAGVY) form a helical membrane-spanning segment. The Extracellular portion of the chain corresponds to 189–213 (NNELQVTSCGLSFPRPERAWFQASR). The chain crosses the membrane as a helical span at residues 214–236 (IYTLVLGFVVPMCTLCVLYADLL). The Cytoplasmic segment spans residues 237-256 (RRLRALRLHSGAKALGKAKR). Residues 257–279 (KVSLLVLAVLAVGLLCWTPFHLA) form a helical membrane-spanning segment. Over 280 to 293 (SIVALTTDLPQTPL) the chain is Extracellular. A helical transmembrane segment spans residues 294–316 (VIIVSYVVTSLSYTSSCLNPFLY). Over 317 to 336 (AFLDHSFRKSLRTACRCQGA) the chain is Cytoplasmic.

It belongs to the G-protein coupled receptor 1 family.

It localises to the cell membrane. In terms of biological role, interacts specifically with a number of opioid ligands. Receptor for neuropeptides B and W, which may be involved in neuroendocrine system regulation, food intake and the organization of other signals. The protein is Neuropeptides B/W receptor type 2 (NPBWR2) of Bos taurus (Bovine).